A 30-amino-acid polypeptide reads, in one-letter code: Cytochrome b6/f complex 12.6 kDa peptide (30 aa).

The disordered stretch occupies residues 1–30 (SGSGVRSAKKGGKAQGGQAGVGYKGSTEPG). Gly residues predominate over residues 13 to 23 (KAQGGQAGVGY).

The protein localises to the plastid. It localises to the chloroplast. May be a component of the cytochrome b6/f complex which is part of the photosynthetic respiratory chain. The sequence is that of Cytochrome b6/f complex 12.6 kDa peptide from Euglena gracilis.